The chain runs to 1174 residues: Nucleolar complex protein 1 (1174 aa).

Disordered stretches follow at residues 1 to 20 (MPAA…NKKI), 29 to 237 (VVKQ…EESQ), 715 to 742 (YEDV…VKSS), 893 to 922 (AQNK…LKEG), 944 to 1085 (GVDE…GGRS), and 1116 to 1174 (VKGQ…KRKH). A compositionally biased stretch (basic and acidic residues) spans 33–63 (NKKEHPQRPKFEGKEQVKKPQKIKFGEDGKA). Over residues 95 to 104 (ASKSFNQNHK) the composition is skewed to polar residues. Composition is skewed to basic and acidic residues over residues 113-122 (KFGEDREAVH) and 176-200 (KFGD…EDGA). Composition is skewed to acidic residues over residues 207-216 (SDGDSDEELG) and 715-724 (YEDVKDEADD). Basic and acidic residues-rich tracts occupy residues 725 to 739 (TKDS…DNDV) and 897 to 906 (KQKEIKKDAA). Composition is skewed to acidic residues over residues 907–916 (EEGDDGEAGE), 945–954 (VDEEQDEEEL), 981–1038 (AEDE…DEGS), and 1048–1065 (DSSD…DDED). Positions 1127 to 1143 (NKDKSSDKQLKWEENRR) are enriched in basic and acidic residues. Over residues 1156–1166 (GKPAAKGGRPQ) the composition is skewed to low complexity.

The protein belongs to the CBF/MAK21 family.

It is found in the nucleus. The protein localises to the nucleolus. Its function is as follows. Involved in rRNA processing and ribosome maturation. May also act as a transcription factor. The protein is Nucleolar complex protein 1 of Drosophila melanogaster (Fruit fly).